Here is a 142-residue protein sequence, read N- to C-terminus: Secreted acidic protein 1B (142 aa).

Composition is skewed to acidic residues over residues 1–47 (SDDE…DDNE) and 54–64 (TNDDVDYGDGN). The disordered stretch occupies residues 1 to 74 (SDDESGDDEN…DEAREIGDHS (74 aa)). The Extracellular segment spans residues 1–123 (SDDESGDDEN…YLRSGGSHFK (123 aa)). The segment covering 65 to 74 (DEAREIGDHS) has biased composition (basic and acidic residues). The helical transmembrane segment at 124-141 (GQLLNITLGLGFCILFLL) threads the bilayer. Position 142 (Leu142) is a topological domain, cytoplasmic.

As to expression, component of the acid-insoluble and acid-soluble organic matrix of the aragonitic skeleton (at protein level).

Its subcellular location is the membrane. This chain is Secreted acidic protein 1B, found in Acropora millepora (Staghorn coral).